We begin with the raw amino-acid sequence, 241 residues long: Alpha/beta-tubulin-N-acetyltransferase 9 (241 aa).

The region spanning 34 to 181 is the N-acetyltransferase domain; that stretch reads EELRHLTASE…VTLRLAVSEP (148 aa).

It belongs to the acetyltransferase family. GNAT subfamily.

It catalyses the reaction N-terminal L-methionyl-[tubulin] + acetyl-CoA = N-terminal N(alpha)-acetyl-L-methionyl-[tubulin] + CoA + H(+). Its function is as follows. N-acetyltransferase that mediates the acetylation of the N-terminal residues of alpha- and beta-tubulin. In Mus musculus (Mouse), this protein is Alpha/beta-tubulin-N-acetyltransferase 9 (Nat9).